A 97-amino-acid chain; its full sequence is Co-chaperonin GroES (97 aa).

It belongs to the GroES chaperonin family. As to quaternary structure, heptamer of 7 subunits arranged in a ring. Interacts with the chaperonin GroEL.

Its subcellular location is the cytoplasm. Functionally, together with the chaperonin GroEL, plays an essential role in assisting protein folding. The GroEL-GroES system forms a nano-cage that allows encapsulation of the non-native substrate proteins and provides a physical environment optimized to promote and accelerate protein folding. GroES binds to the apical surface of the GroEL ring, thereby capping the opening of the GroEL channel. The chain is Co-chaperonin GroES from Elusimicrobium minutum (strain Pei191).